We begin with the raw amino-acid sequence, 441 residues long: Arginine biosynthesis bifunctional protein ArgJ, mitochondrial (441 aa).

Positions 178, 204, 215, 304, 436, and 441 each coordinate substrate. The active-site Nucleophile is T215.

The protein belongs to the ArgJ family. Heterodimer of an alpha and a beta chain. In terms of processing, the alpha and beta chains are autoproteolytically processed from a single precursor protein within the mitochondrion.

The protein localises to the mitochondrion matrix. The catalysed reaction is N(2)-acetyl-L-ornithine + L-glutamate = N-acetyl-L-glutamate + L-ornithine. It carries out the reaction L-glutamate + acetyl-CoA = N-acetyl-L-glutamate + CoA + H(+). It functions in the pathway amino-acid biosynthesis; L-arginine biosynthesis; L-ornithine and N-acetyl-L-glutamate from L-glutamate and N(2)-acetyl-L-ornithine (cyclic): step 1/1. Its pathway is amino-acid biosynthesis; L-arginine biosynthesis; N(2)-acetyl-L-ornithine from L-glutamate: step 1/4. Its function is as follows. Catalyzes two activities which are involved in the cyclic version of arginine biosynthesis: the synthesis of acetylglutamate from glutamate and acetyl-CoA, and of ornithine by transacetylation between acetylornithine and glutamate. The chain is Arginine biosynthesis bifunctional protein ArgJ, mitochondrial from Lodderomyces elongisporus (strain ATCC 11503 / CBS 2605 / JCM 1781 / NBRC 1676 / NRRL YB-4239) (Yeast).